The primary structure comprises 368 residues: Transcription factor TGA7 (368 aa).

Polar residues predominate over residues 70-82; it reads HNQIEAEQPSSND. The interval 70-89 is disordered; that stretch reads HNQIEAEQPSSNDNQDDDGR. The bZIP domain maps to 91–151; sequence HDKMKRRLAQ…LGPSGSINTG (61 aa). Coiled coils occupy residues 92–142 and 252–285; these read DKMK…QGHL and DQQI…SLAE. Residues 93 to 113 form a basic motif region; it reads KMKRRLAQNREAARKSRLRKK. Residues 119–133 are leucine-zipper; that stretch reads LEESRLKLSQLEQEL. In terms of domain architecture, DOG1 spans 152–363; sequence IASFEMEYSH…RALSSLWAAR (212 aa).

Belongs to the bZIP family. As to quaternary structure, binds DNA as a dimer. Interacts with NPR1 and NPR4. Interacts with GRXC7/ROXY1.

The protein localises to the nucleus. Its function is as follows. Transcriptional activator that binds specifically to the DNA sequence 5'-TGACG-3'. Recognizes ocs elements like the as-1 motif of the cauliflower mosaic virus 35S promoter. Binding to the as-1-like cis elements mediate auxin- and salicylic acid-inducible transcription. May be involved in the induction of the systemic acquired resistance (SAR) via its interaction with NPR1. The sequence is that of Transcription factor TGA7 (TGA7) from Arabidopsis thaliana (Mouse-ear cress).